The chain runs to 111 residues: Ig kappa chain V-III region PC 6684 (111 aa).

Residues 1–23 (DIVLTQSPASLAVSLGQRATISC) are framework-1. Cysteine 23 and cysteine 92 are oxidised to a cystine. Positions 24–38 (RASKSVSTSGYSYMH) are complementarity-determining-1. A framework-2 region spans residues 39–53 (WYQQKPGQPPKLLIY). The tract at residues 54–60 (LASNLES) is complementarity-determining-2. The tract at residues 61 to 92 (GVPARFSGSGSGTDFTLNIHPVEEEDAATYYC) is framework-3. The segment at 93 to 101 (QHSRELPRT) is complementarity-determining-3. Positions 102–111 (FGGGTKLEIK) are framework-4.

This is Ig kappa chain V-III region PC 6684 from Mus musculus (Mouse).